We begin with the raw amino-acid sequence, 173 residues long: Small ribosomal subunit protein uS7 (173 aa).

The protein belongs to the universal ribosomal protein uS7 family. Part of the 30S ribosomal subunit. Contacts proteins S9 and S11.

Functionally, one of the primary rRNA binding proteins, it binds directly to 16S rRNA where it nucleates assembly of the head domain of the 30S subunit. Is located at the subunit interface close to the decoding center, probably blocks exit of the E-site tRNA. This chain is Small ribosomal subunit protein uS7, found in Orientia tsutsugamushi (strain Boryong) (Rickettsia tsutsugamushi).